The primary structure comprises 345 residues: D-alanine--D-alanine ligase (345 aa).

Residues 133–340 (KLYAKERGVK…IDYRYIHQIQ (208 aa)) enclose the ATP-grasp domain. 162-211 (PLIVKPLRLGSSIGVSIAKNRQELDYALDVAFEFDEAALLEPFMQGIKEY) serves as a coordination point for ATP. Residues D284, E296, and N298 each coordinate Mg(2+).

It belongs to the D-alanine--D-alanine ligase family. It depends on Mg(2+) as a cofactor. Mn(2+) serves as cofactor.

Its subcellular location is the cytoplasm. The catalysed reaction is 2 D-alanine + ATP = D-alanyl-D-alanine + ADP + phosphate + H(+). Its pathway is cell wall biogenesis; peptidoglycan biosynthesis. Its function is as follows. Cell wall formation. The chain is D-alanine--D-alanine ligase from Wolinella succinogenes (strain ATCC 29543 / DSM 1740 / CCUG 13145 / JCM 31913 / LMG 7466 / NCTC 11488 / FDC 602W) (Vibrio succinogenes).